The following is a 236-amino-acid chain: 2,3,4,5-tetrahydropyridine-2,6-dicarboxylate N-acetyltransferase (236 aa).

Belongs to the transferase hexapeptide repeat family. DapH subfamily.

It carries out the reaction (S)-2,3,4,5-tetrahydrodipicolinate + acetyl-CoA + H2O = L-2-acetamido-6-oxoheptanedioate + CoA. The protein operates within amino-acid biosynthesis; L-lysine biosynthesis via DAP pathway; LL-2,6-diaminopimelate from (S)-tetrahydrodipicolinate (acetylase route): step 1/3. Functionally, catalyzes the transfer of an acetyl group from acetyl-CoA to tetrahydrodipicolinate. In Clostridium botulinum (strain Langeland / NCTC 10281 / Type F), this protein is 2,3,4,5-tetrahydropyridine-2,6-dicarboxylate N-acetyltransferase.